Consider the following 315-residue polypeptide: Olfactory receptor 56A3 (315 aa).

Over 1 to 29 (MTTHRNDTLSTEASDFLLNCFVRSPSWQH) the chain is Extracellular. N6 is a glycosylation site (N-linked (GlcNAc...) asparagine). A helical transmembrane segment spans residues 30–50 (WLSLPLSLLFLLAVGANTTLL). At 51–58 (MTIWLEAS) the chain is on the cytoplasmic side. The helical transmembrane segment at 59 to 79 (LHQPLYYLLSLLSLLDIVLCL) threads the bilayer. Residues 80–103 (TVIPKVLTIFWFDLRPISFPACFL) lie on the Extracellular side of the membrane. A disulfide bridge links C101 with C193. Residues 104 to 124 (QMYIMNCFLAMESCTFMVMAY) form a helical membrane-spanning segment. Residues 125-143 (DRYVAICHPLRYPSIITDH) lie on the Cytoplasmic side of the membrane. The helical transmembrane segment at 144–164 (FVVKAAMFILTRNVLMTLPIP) threads the bilayer. Residues 165–200 (ILSAQLRYCGRNVIENCICANMSVSRLSCDDVTINH) are Extracellular-facing. N185 is a glycosylation site (N-linked (GlcNAc...) asparagine). Residues 201-221 (LYQFAGGWTLLGSDLILIFLS) form a helical membrane-spanning segment. Over 222–241 (YTFILRAVLRLKAEGAVAKA) the chain is Cytoplasmic. A helical membrane pass occupies residues 242 to 262 (LSTCGSHFMLILFFSTILLVF). Residues 263 to 277 (VLTHVAKKKVSPDVP) lie on the Extracellular side of the membrane. The chain crosses the membrane as a helical span at residues 278–298 (VLLNVLHHVIPAALNPIIYGV). Residues 299–315 (RTQEIKQGMQRLLKKGC) lie on the Cytoplasmic side of the membrane.

This sequence belongs to the G-protein coupled receptor 1 family.

The protein resides in the cell membrane. In terms of biological role, odorant receptor. The protein is Olfactory receptor 56A3 (OR56A3) of Homo sapiens (Human).